Consider the following 438-residue polypeptide: Indole diterpene prenyltransferase paxD (438 aa).

An L-tryptophan-binding site is contributed by 80 to 81; it reads FM. Substrate contacts are provided by arginine 102, lysine 190, arginine 264, lysine 266, tyrosine 268, tyrosine 349, and tyrosine 418.

This sequence belongs to the tryptophan dimethylallyltransferase family.

It functions in the pathway secondary metabolite biosynthesis. Indole diterpene prenyltransferase; part of the gene cluster that mediates the biosynthesis of paxilline, a mycotoxin that acts as an inhibitor of mammalian maxi-K channels. PaxG, the geranylgeranyl diphosphate (GGPP) synthase is proposed to catalyze the first step in paxilline biosynthesis. Condensation of indole-3-glycerol phosphate with GGPP by paxC then forms 3-geranylgeranylindole (3-GGI), followed by epoxidation and cyclization of this intermediate (by paxM and paxB) to form paspaline. Paspaline is subsequently converted to 13-desoxypaxilline by paxP, the latter being then converted to paxilline by paxQ. Finally paxilline can be mono- and di-prenylated by paxD. This chain is Indole diterpene prenyltransferase paxD, found in Penicillium paxilli.